Reading from the N-terminus, the 648-residue chain is Sodium/nucleoside cotransporter 1 (648 aa).

Residues 1–80 (MADNTQRQRE…ARSFCREHRQ (80 aa)) lie on the Cytoplasmic side of the membrane. A helical transmembrane segment spans residues 81–104 (LFGWICKGLLSTACLGFLMVACLL). The Extracellular portion of the chain corresponds to 105 to 109 (DLQRA). A helical transmembrane segment spans residues 110-128 (LALLIITCVVLVFLAYDLL). At 129–147 (KRLLGSKLRRCVKFQGHSC) the chain is on the cytoplasmic side. A helical membrane pass occupies residues 148-167 (LSLWLKRGLALAAGVGLILW). Residues 168-178 (LSLDTAQRPEQ) lie on the Extracellular side of the membrane. The helical transmembrane segment at 179–195 (LVSFAGICVFLVLLFAG) threads the bilayer. The Cytoplasmic portion of the chain corresponds to 196–201 (SKHHRA). Residues 202–222 (VSWRAVSWGLGLQFVLGLFVI) form a helical membrane-spanning segment. The Extracellular portion of the chain corresponds to 223–261 (RTEPGFIAFQWLGDQIQVFLSYTEAGSSFVFGEALVKDV). A helical membrane pass occupies residues 262 to 283 (FAFQVLPIIIFFSCVMSVLYYL). Topologically, residues 284 to 294 (GLMQWVILKIA) are cytoplasmic. A helical membrane pass occupies residues 295 to 318 (WLMQVTMGTSATETLSVAGNIFVS). Residues 319-337 (QTEAPLLIRPYLADMTLSE) are Extracellular-facing. Residues 338-360 (VHVVMTGGYATIAGSLLGAYISF) form a helical membrane-spanning segment. The Cytoplasmic segment spans residues 361-366 (GIDAAS). Residues 367-386 (LIAASVMAAPCALALSKLVY) form a helical membrane-spanning segment. Residues 387–423 (PEVEESKFRSENGVKLTYGDAQNLLEAASAGAAISVK) are Extracellular-facing. A helical transmembrane segment spans residues 424-446 (VVANIAANLIAFLAVLAFVNAAL). Over 447–457 (SWLGDMVDIQG) the chain is Cytoplasmic. Residues 458–479 (LSFQLICSYVLRPVAFLMGVAW) form a helical membrane-spanning segment. The Extracellular portion of the chain corresponds to 480–534 (EDCPVVAELLGIKFFLNEFVAYQELSQYKQRRLAGAEEWLGDKKQWISVRAEILT). The helical transmembrane segment at 535-558 (TYALCGFANFSSIGIMLGGLTSLV) threads the bilayer. Topologically, residues 559 to 569 (PQRRSDFSQIV) are cytoplasmic. A helical transmembrane segment spans residues 570 to 592 (LRALITGAFVSLLNACVAGILYV). Residues 593–648 (PRGVEVDCVSLLNQTVSSSSFEVYLCCRQVFQSTSSEFSQVALDNCCRFYNHTVCT) lie on the Extracellular side of the membrane. N-linked (GlcNAc...) asparagine glycans are attached at residues Asn605 and Asn643.

Belongs to the concentrative nucleoside transporter (CNT) (TC 2.A.41) family. Post-translationally, N-glycosylated. N-glycosylation is required for localization to the plasma membrane and the transporter activity. In terms of tissue distribution, expressed predominantly in the brush-border membranes of the polarized epithelial cells of jejunum and renal cortical tubules and in the bile canalicular membranes of liver parenchymal cells.

The protein resides in the cell membrane. The protein localises to the apical cell membrane. It carries out the reaction uridine(out) + Na(+)(out) = uridine(in) + Na(+)(in). It catalyses the reaction thymidine(out) + Na(+)(out) = thymidine(in) + Na(+)(in). The enzyme catalyses cytidine(out) + Na(+)(out) = cytidine(in) + Na(+)(in). The catalysed reaction is adenosine(out) + Na(+)(out) = adenosine(in) + Na(+)(in). With respect to regulation, due to its high apparent affinity but slow transport, adenosine could act as a negative regulator of pyrimidine transport under some conditions. Sodium and pyrimidine nucleoside symporter of the plasma membrane that imports uridine, thymidine and cytidine into cells by coupling their transport to the transmembrane sodium electrochemical gradient. Also transports adenosine, an atypical substrate transported with high apparent affinity, but low maximum velocity. Therefore, exhibits the transport characteristics of the nucleoside transport system cit or N2 subtype (N2/cit). Involved in renal nucleoside (re)absorption. The sequence is that of Sodium/nucleoside cotransporter 1 from Rattus norvegicus (Rat).